The chain runs to 280 residues: uncharacterized protein (280 aa).

A signal peptide spans 1–21 (MRPVIKVGLSTASVYPLRAEA).

The protein to M.tuberculosis Rv0498 and S.coelicolor SCO3347.

This is an uncharacterized protein from Mycobacterium leprae (strain TN).